The sequence spans 347 residues: MKDERLVQRKNDHLDIVLDPRRAVTQASAGFERWRFTHCALPELNFSDITLETTFLNRQLQAPLLISSMTGGVERSRHINRHLAEAAQVLKIAMGVGSQRVAIESDAGLGLDKTLRQLAPDVPLLANLGAAQLTGRKGIDYARRAVEMIEADALIVHLNPLQEALQPGGDRDWRGRLAAIETLVRELPVPLVVKEVGAGISRTVAGQLIDAGVTVIDVAGAGGTSWAAVEGERAATEQQRSVANVFADWGIPTAEALVDIAEAWPQMPLIASGGIKNGVDAAKALRLGACMVGQAAAVLGSAGVSTEKVIDHFNVIIEQLRVACFCTGSRSLSDLKQADIRYVRDTP.

9–10 (RK) contributes to the substrate binding site. FMN is bound by residues Ser-67, 68 to 70 (SMT), Ser-98, and Asn-127. 98–100 (SQR) is a substrate binding site. A substrate-binding site is contributed by Gln-162. A Mg(2+)-binding site is contributed by Glu-163. FMN contacts are provided by residues Lys-194, Thr-224, 274–276 (GIK), and 295–296 (AA).

It belongs to the IPP isomerase type 2 family. In terms of assembly, homooctamer. Dimer of tetramers. Requires FMN as cofactor. NADPH is required as a cofactor. Mg(2+) serves as cofactor.

It is found in the cytoplasm. The enzyme catalyses isopentenyl diphosphate = dimethylallyl diphosphate. Functionally, involved in the biosynthesis of isoprenoids. Catalyzes the 1,3-allylic rearrangement of the homoallylic substrate isopentenyl (IPP) to its allylic isomer, dimethylallyl diphosphate (DMAPP). The polypeptide is Isopentenyl-diphosphate delta-isomerase (Pseudescherichia vulneris (Escherichia vulneris)).